We begin with the raw amino-acid sequence, 150 residues long: uncharacterized protein (150 aa).

It is found in the plastid. It localises to the chloroplast. This is an uncharacterized protein from Pyropia yezoensis (Susabi-nori).